A 330-amino-acid chain; its full sequence is Flotillin-like protein FloA (330 aa).

Helical transmembrane passes span 5-25 (FLPLILLGAAVLLLAIFFYYV) and 27-47 (FLLWISAKVSGVNISLIQLFL).

Belongs to the flotillin-like FloA family. Homooligomerizes.

The protein resides in the cell membrane. It is found in the membrane raft. Functionally, found in functional membrane microdomains (FMM) that may be equivalent to eukaryotic membrane rafts. FMMs are highly dynamic and increase in number as cells age. Flotillins are thought to be important factors in membrane fluidity. The sequence is that of Flotillin-like protein FloA from Parabacteroides distasonis (strain ATCC 8503 / DSM 20701 / CIP 104284 / JCM 5825 / NCTC 11152).